Reading from the N-terminus, the 216-residue chain is LexA repressor 1 (216 aa).

Residues 38–58 (TRQIGAAVGLRSMSSVARHLR) constitute a DNA-binding region (H-T-H motif). Active-site for autocatalytic cleavage activity residues include Ser140 and Lys177.

The protein belongs to the peptidase S24 family. Homodimer.

It carries out the reaction Hydrolysis of Ala-|-Gly bond in repressor LexA.. Its function is as follows. Represses a number of genes involved in the response to DNA damage (SOS response), including recA and lexA. In the presence of single-stranded DNA, RecA interacts with LexA causing an autocatalytic cleavage which disrupts the DNA-binding part of LexA, leading to derepression of the SOS regulon and eventually DNA repair. In Nocardia farcinica (strain IFM 10152), this protein is LexA repressor 1.